The following is a 679-amino-acid chain: Enzymatic polyprotein (679 aa).

Residues 40–130 (LHCFVDTGAS…LYEPFIQFTD (91 aa)) are protease. The active site involves D45. The Reverse transcriptase domain maps to 272-452 (LKVIKPSKSP…KKINFLGLEI (181 aa)).

This sequence belongs to the caulimoviridae enzymatic polyprotein family.

It catalyses the reaction DNA(n) + a 2'-deoxyribonucleoside 5'-triphosphate = DNA(n+1) + diphosphate. In terms of biological role, encodes for at least two polypeptides: protease (PR) and reverse transcriptase (RT). The protease processes the polyprotein in cis. Reverse transcriptase is multifunctional enzyme that converts the viral RNA genome into dsDNA in viral cytoplasmic capsids. This enzyme displays a DNA polymerase activity that can copy either DNA or RNA templates, and a ribonuclease H (RNase H) activity that cleaves the RNA strand of RNA-DNA heteroduplexes in a partially processive 3'- to 5'-endonucleasic mode. Neo-synthesized pregenomic RNA (pgRNA) are encapsidated, and reverse-transcribed inside the nucleocapsid. Partial (+)DNA is synthesized from the (-)DNA template and generates the relaxed circular DNA (RC-DNA) genome. After budding and infection, the RC-DNA migrates in the nucleus, and is converted into a plasmid-like covalently closed circular DNA (cccDNA). This chain is Enzymatic polyprotein, found in Cauliflower mosaic virus (strain CM-1841) (CaMV).